A 319-amino-acid polypeptide reads, in one-letter code: tRNA dimethylallyltransferase (319 aa).

9 to 16 (GPTAVGKS) contacts ATP. 11–16 (TAVGKS) serves as a coordination point for substrate. Residues 39–42 (DSMQ) form an interaction with substrate tRNA region.

The protein belongs to the IPP transferase family. Monomer. Mg(2+) is required as a cofactor.

The catalysed reaction is adenosine(37) in tRNA + dimethylallyl diphosphate = N(6)-dimethylallyladenosine(37) in tRNA + diphosphate. Catalyzes the transfer of a dimethylallyl group onto the adenine at position 37 in tRNAs that read codons beginning with uridine, leading to the formation of N6-(dimethylallyl)adenosine (i(6)A). This is tRNA dimethylallyltransferase from Thermobifida fusca (strain YX).